The primary structure comprises 316 residues: 4-hydroxy-3-methylbut-2-enyl diphosphate reductase (316 aa).

C12 is a binding site for [4Fe-4S] cluster. 2 residues coordinate (2E)-4-hydroxy-3-methylbut-2-enyl diphosphate: H43 and H81. Dimethylallyl diphosphate-binding residues include H43 and H81. 2 residues coordinate isopentenyl diphosphate: H43 and H81. C103 serves as a coordination point for [4Fe-4S] cluster. Position 131 (H131) interacts with (2E)-4-hydroxy-3-methylbut-2-enyl diphosphate. A dimethylallyl diphosphate-binding site is contributed by H131. Residue H131 coordinates isopentenyl diphosphate. E133 (proton donor) is an active-site residue. T170 is a (2E)-4-hydroxy-3-methylbut-2-enyl diphosphate binding site. C198 is a [4Fe-4S] cluster binding site. S226, N228, and S271 together coordinate (2E)-4-hydroxy-3-methylbut-2-enyl diphosphate. Dimethylallyl diphosphate-binding residues include S226, N228, and S271. Positions 226, 228, and 271 each coordinate isopentenyl diphosphate.

It belongs to the IspH family. The cofactor is [4Fe-4S] cluster.

The catalysed reaction is isopentenyl diphosphate + 2 oxidized [2Fe-2S]-[ferredoxin] + H2O = (2E)-4-hydroxy-3-methylbut-2-enyl diphosphate + 2 reduced [2Fe-2S]-[ferredoxin] + 2 H(+). It catalyses the reaction dimethylallyl diphosphate + 2 oxidized [2Fe-2S]-[ferredoxin] + H2O = (2E)-4-hydroxy-3-methylbut-2-enyl diphosphate + 2 reduced [2Fe-2S]-[ferredoxin] + 2 H(+). Its pathway is isoprenoid biosynthesis; dimethylallyl diphosphate biosynthesis; dimethylallyl diphosphate from (2E)-4-hydroxy-3-methylbutenyl diphosphate: step 1/1. It functions in the pathway isoprenoid biosynthesis; isopentenyl diphosphate biosynthesis via DXP pathway; isopentenyl diphosphate from 1-deoxy-D-xylulose 5-phosphate: step 6/6. Catalyzes the conversion of 1-hydroxy-2-methyl-2-(E)-butenyl 4-diphosphate (HMBPP) into a mixture of isopentenyl diphosphate (IPP) and dimethylallyl diphosphate (DMAPP). Acts in the terminal step of the DOXP/MEP pathway for isoprenoid precursor biosynthesis. The protein is 4-hydroxy-3-methylbut-2-enyl diphosphate reductase of Bacillus anthracis (strain A0248).